We begin with the raw amino-acid sequence, 607 residues long: uncharacterized protein (607 aa).

Disordered stretches follow at residues 28-114 (GAER…KLRR) and 142-188 (DQER…NNSS). Positions 35 to 50 (SSHGSINSRSASPNKA) are enriched in polar residues. 2 stretches are compositionally biased toward basic and acidic residues: residues 90–102 (VNGE…DHDT) and 161–174 (KENK…KDLS). The span at 177–188 (SSSSMKKANNSS) shows a compositional bias: low complexity. 2 consecutive PHD-type zinc fingers follow at residues 263-312 (NDYC…CKHH) and 406-459 (PILC…HSDH).

This is an uncharacterized protein from Schizosaccharomyces pombe (strain 972 / ATCC 24843) (Fission yeast).